A 293-amino-acid polypeptide reads, in one-letter code: tRNA pseudouridine synthase A (293 aa).

Catalysis depends on Asp-67, which acts as the Nucleophile. Tyr-125 provides a ligand contact to substrate.

Belongs to the tRNA pseudouridine synthase TruA family. As to quaternary structure, homodimer.

It carries out the reaction uridine(38/39/40) in tRNA = pseudouridine(38/39/40) in tRNA. In terms of biological role, formation of pseudouridine at positions 38, 39 and 40 in the anticodon stem and loop of transfer RNAs. In Synechococcus sp. (strain CC9605), this protein is tRNA pseudouridine synthase A.